A 244-amino-acid chain; its full sequence is MSIDCNVVENVRYSRVLLKVSGEALAGERGFGFDQDVIGKLSCDLKKVRESGVELCIVVGGGNIFRGSSTSFGFERASNDYVGMLATMINALALQNSLEDMGIASRVLSAIPMTAVCETYIRRRAIRHLEKGRVVICAAGIGSPFFTTDTAAVLRSIEMRCDAIFKGTQVDGVYSSDPKKDCSATRYDKISYHDLLASDLKIMDAAAVSLARENSIPIIVFDLGKENAFSEVMKGRGTFTTISG.

ATP is bound at residue K19 to G22. The tract at residues G27–G32 is involved in allosteric activation by GTP. G61 lines the UMP pocket. ATP contacts are provided by G62 and R66. UMP is bound by residues D80 and I141–T148. Positions 168, 169, 174, and 177 each coordinate ATP.

This sequence belongs to the UMP kinase family. As to quaternary structure, homohexamer.

It localises to the cytoplasm. The catalysed reaction is UMP + ATP = UDP + ADP. Its pathway is pyrimidine metabolism; CTP biosynthesis via de novo pathway; UDP from UMP (UMPK route): step 1/1. With respect to regulation, allosterically activated by GTP. Inhibited by UTP. Catalyzes the reversible phosphorylation of UMP to UDP. The protein is Uridylate kinase of Anaplasma phagocytophilum (strain HZ).